The sequence spans 247 residues: ATP synthase subunit a, chloroplastic (247 aa).

5 helical membrane-spanning segments follow: residues 38–58 (QVLI…AIAV), 95–115 (VPFI…GALL), 134–154 (INTT…AGLT), 199–219 (LVVV…VMFL), and 220–240 (GLFT…AYIG).

It belongs to the ATPase A chain family. As to quaternary structure, F-type ATPases have 2 components, CF(1) - the catalytic core - and CF(0) - the membrane proton channel. CF(1) has five subunits: alpha(3), beta(3), gamma(1), delta(1), epsilon(1). CF(0) has four main subunits: a, b, b' and c.

Its subcellular location is the plastid. The protein resides in the chloroplast thylakoid membrane. Key component of the proton channel; it plays a direct role in the translocation of protons across the membrane. The sequence is that of ATP synthase subunit a, chloroplastic from Ceratophyllum demersum (Rigid hornwort).